Consider the following 635-residue polypeptide: BTB/POZ domain-containing protein SETH6 (635 aa).

The BTB domain maps to 39 to 104; sequence SDLTIEVGSA…CYGVGVQYNS (66 aa). The region spanning 206–494 is the NPH3 domain; it reads DWWGRSLPIL…VQVLFYEQTR (289 aa). Tyr435 is subject to Phosphotyrosine. The segment at 604-635 is disordered; the sequence is QSVASSGKKHTEEKTNSERRFMFQKRRCHSVS. Over residues 612–624 the composition is skewed to basic and acidic residues; sequence KHTEEKTNSERRF. A compositionally biased stretch (basic residues) spans 625 to 635; it reads MFQKRRCHSVS.

The protein belongs to the NPH3 family.

The protein operates within protein modification; protein ubiquitination. Functionally, may act as a substrate-specific adapter of an E3 ubiquitin-protein ligase complex (CUL3-RBX1-BTB) which mediates the ubiquitination and subsequent proteasomal degradation of target proteins. This chain is BTB/POZ domain-containing protein SETH6 (SETH6), found in Arabidopsis thaliana (Mouse-ear cress).